Here is a 449-residue protein sequence, read N- to C-terminus: UDP-N-acetylmuramate--L-alanine ligase (449 aa).

113–119 (GSHGKTT) lines the ATP pocket.

It belongs to the MurCDEF family.

It localises to the cytoplasm. It carries out the reaction UDP-N-acetyl-alpha-D-muramate + L-alanine + ATP = UDP-N-acetyl-alpha-D-muramoyl-L-alanine + ADP + phosphate + H(+). It functions in the pathway cell wall biogenesis; peptidoglycan biosynthesis. Its function is as follows. Cell wall formation. The protein is UDP-N-acetylmuramate--L-alanine ligase of Hydrogenobaculum sp. (strain Y04AAS1).